Here is a 118-residue protein sequence, read N- to C-terminus: Myotrophin (118 aa).

3 ANK repeats span residues 1–30 (MSDK…DVNR), 34–65 (GGRK…NAPD), and 67–98 (HNIT…TVKG).

The protein belongs to the myotrophin family.

The protein localises to the cytoplasm. It localises to the nucleus. Its subcellular location is the perinuclear region. In terms of biological role, regulates NF-kappa-B transcription factor activity. Promotes growth of cardiomyocytes, but not cardiomyocyte proliferation. Promotes cardiac muscle hypertrophy. Plays a role in the regulation of the growth of actin filaments. Inhibits the activity of the F-actin-capping protein complex. The sequence is that of Myotrophin (MTPN) from Gallus gallus (Chicken).